The chain runs to 248 residues: Granzyme F (248 aa).

The first 18 residues, 1–18 (MPPILILLTLLLPLRAGA), serve as a signal peptide directing secretion. A propeptide spanning residues 19–20 (EE) is cleaved from the precursor. The Peptidase S1 domain occupies 21 to 246 (IIGGHEVKPH…YLPWISRNMK (226 aa)). The cysteines at positions 50 and 66 are disulfide-linked. His-65 (charge relay system) is an active-site residue. Asn-106 is a glycosylation site (N-linked (GlcNAc...) asparagine). Residue Asp-109 is the Charge relay system of the active site. Disulfide bonds link Cys-143/Cys-210 and Cys-175/Cys-189. A glycan (N-linked (GlcNAc...) asparagine) is linked at Asn-154. The Charge relay system role is filled by Ser-204. Residue Asn-223 is glycosylated (N-linked (GlcNAc...) asparagine).

This sequence belongs to the peptidase S1 family. Granzyme subfamily.

It is found in the cytolytic granule. In terms of biological role, this enzyme is probably necessary for target cell lysis in cell-mediated immune responses. The chain is Granzyme F (Gzmf) from Mus musculus (Mouse).